We begin with the raw amino-acid sequence, 55 residues long: Large ribosomal subunit protein bL32c (55 aa).

Positions 1-24 (MAVPKKRTSKSKKNARKANWKRKG) are disordered.

Belongs to the bacterial ribosomal protein bL32 family.

The protein localises to the plastid. It localises to the chloroplast. In Phaeodactylum tricornutum (strain CCAP 1055/1), this protein is Large ribosomal subunit protein bL32c.